Here is a 465-residue protein sequence, read N- to C-terminus: Probable zinc metalloprotease PTT_17836 (465 aa).

The first 20 residues, 1–20 (MRSASTLAVCAATLLQIACS), serve as a signal peptide directing secretion. A glycan (N-linked (GlcNAc...) asparagine) is linked at N140. Residues H163, D183, and E216 each coordinate Zn(2+). N-linked (GlcNAc...) asparagine glycosylation occurs at N231. D243 contributes to the Zn(2+) binding site. N272, N330, N378, N384, N421, and N426 each carry an N-linked (GlcNAc...) asparagine glycan. Residues 371 to 464 (APTNVGVNTT…LPFPFGCARN (94 aa)) enclose the Fibronectin type-III domain.

This sequence belongs to the peptidase M28 family. M28B subfamily. Zn(2+) is required as a cofactor.

It localises to the secreted. The chain is Probable zinc metalloprotease PTT_17836 from Pyrenophora teres f. teres (strain 0-1) (Barley net blotch fungus).